A 515-amino-acid polypeptide reads, in one-letter code: NAD(P)H-quinone oxidoreductase subunit 2 (515 aa).

14 consecutive transmembrane segments (helical) span residues 14–34 (TILP…ADLI), 42–62 (WTPY…IPLW), 79–99 (LSLF…LMSI), 109–128 (LGEF…FIAG), 132–151 (LVFI…LLTG), 167–187 (LLIG…LYGL), 206–226 (LGLV…ISAV), 240–260 (PTPV…ALAI), 274–294 (WQLI…VVAL), 302–322 (MLAY…VVGT), 330–350 (LFYL…VILF), 374–394 (LGLS…GFFG), 396–416 (IYLF…LGLL), and 462–482 (VGLV…NPLF).

The protein belongs to the complex I subunit 2 family. In terms of assembly, NDH-1 can be composed of about 15 different subunits; different subcomplexes with different compositions have been identified which probably have different functions.

It is found in the cellular thylakoid membrane. It catalyses the reaction a plastoquinone + NADH + (n+1) H(+)(in) = a plastoquinol + NAD(+) + n H(+)(out). The catalysed reaction is a plastoquinone + NADPH + (n+1) H(+)(in) = a plastoquinol + NADP(+) + n H(+)(out). Functionally, NDH-1 shuttles electrons from an unknown electron donor, via FMN and iron-sulfur (Fe-S) centers, to quinones in the respiratory and/or the photosynthetic chain. The immediate electron acceptor for the enzyme in this species is believed to be plastoquinone. Couples the redox reaction to proton translocation, and thus conserves the redox energy in a proton gradient. Cyanobacterial NDH-1 also plays a role in inorganic carbon-concentration. In Thermosynechococcus vestitus (strain NIES-2133 / IAM M-273 / BP-1), this protein is NAD(P)H-quinone oxidoreductase subunit 2.